Here is a 79-residue protein sequence, read N- to C-terminus: Acyl carrier protein (79 aa).

The 76-residue stretch at 2 to 77 (DNIEQRVKKI…QAIDYARANV (76 aa)) folds into the Carrier domain. S37 carries the post-translational modification O-(pantetheine 4'-phosphoryl)serine.

The protein belongs to the acyl carrier protein (ACP) family. In terms of processing, 4'-phosphopantetheine is transferred from CoA to a specific serine of apo-ACP by AcpS. This modification is essential for activity because fatty acids are bound in thioester linkage to the sulfhydryl of the prosthetic group.

The protein resides in the cytoplasm. It functions in the pathway lipid metabolism; fatty acid biosynthesis. Carrier of the growing fatty acid chain in fatty acid biosynthesis. The protein is Acyl carrier protein of Burkholderia cenocepacia (strain HI2424).